Reading from the N-terminus, the 348-residue chain is Dihydroorotase (348 aa).

Zn(2+)-binding residues include histidine 17 and histidine 19. Substrate contacts are provided by residues 19 to 21 (HLR) and asparagine 45. Residues lysine 103, histidine 140, and histidine 178 each coordinate Zn(2+). Lysine 103 bears the N6-carboxylysine mark. A substrate-binding site is contributed by histidine 140. Residue leucine 223 participates in substrate binding. Aspartate 251 contributes to the Zn(2+) binding site. Residue aspartate 251 is part of the active site. Substrate contacts are provided by histidine 255 and alanine 267.

It belongs to the metallo-dependent hydrolases superfamily. DHOase family. Class II DHOase subfamily. Homodimer. It depends on Zn(2+) as a cofactor.

It catalyses the reaction (S)-dihydroorotate + H2O = N-carbamoyl-L-aspartate + H(+). It participates in pyrimidine metabolism; UMP biosynthesis via de novo pathway; (S)-dihydroorotate from bicarbonate: step 3/3. In terms of biological role, catalyzes the reversible cyclization of carbamoyl aspartate to dihydroorotate. This chain is Dihydroorotase, found in Escherichia coli O6:H1 (strain CFT073 / ATCC 700928 / UPEC).